The following is a 388-amino-acid chain: Ferrochelatase (388 aa).

Fe cation is bound by residues His196 and Glu277.

Belongs to the ferrochelatase family.

The protein localises to the cytoplasm. The catalysed reaction is heme b + 2 H(+) = protoporphyrin IX + Fe(2+). The protein operates within porphyrin-containing compound metabolism; protoheme biosynthesis; protoheme from protoporphyrin-IX: step 1/1. Catalyzes the ferrous insertion into protoporphyrin IX. This is Ferrochelatase from Nostoc sp. (strain PCC 7120 / SAG 25.82 / UTEX 2576).